We begin with the raw amino-acid sequence, 150 residues long: Aspartate 1-decarboxylase (150 aa).

Ser-24 functions as the Schiff-base intermediate with substrate; via pyruvic acid in the catalytic mechanism. Residue Ser-24 is modified to Pyruvic acid (Ser). Substrate is bound at residue Thr-56. The Proton donor role is filled by Tyr-57. 72 to 74 is a binding site for substrate; that stretch reads GAA.

Belongs to the PanD family. As to quaternary structure, heterooctamer of four alpha and four beta subunits. Pyruvate serves as cofactor. In terms of processing, is synthesized initially as an inactive proenzyme, which is activated by self-cleavage at a specific serine bond to produce a beta-subunit with a hydroxyl group at its C-terminus and an alpha-subunit with a pyruvoyl group at its N-terminus.

Its subcellular location is the cytoplasm. It catalyses the reaction L-aspartate + H(+) = beta-alanine + CO2. It participates in cofactor biosynthesis; (R)-pantothenate biosynthesis; beta-alanine from L-aspartate: step 1/1. Catalyzes the pyruvoyl-dependent decarboxylation of aspartate to produce beta-alanine. The polypeptide is Aspartate 1-decarboxylase (Beijerinckia indica subsp. indica (strain ATCC 9039 / DSM 1715 / NCIMB 8712)).